Here is a 752-residue protein sequence, read N- to C-terminus: Double zinc ribbon and ankyrin repeat-containing protein 1 (752 aa).

Ser160 and Ser182 each carry phosphoserine. The tract at residues 164–187 is disordered; it reads IPAYGGGSGSRPPTRQSQSPGFAH. A compositionally biased stretch (polar residues) spans 174–183; it reads RPPTRQSQSP. 2 consecutive DZANK-type zinc fingers follow at residues 211–270 and 339–387; these read CAHC…CVVC and CYRC…GSCG. 2 ANK repeats span residues 605–636 and 640–669; these read ENRL…DPNC and DNRP…DIDQ.

Interacts with NINL isoform 2. Associates with DYNC1H1 and multiple dynein intermediate and light chains as well as actin-binding proteins.

The protein resides in the cytoplasm. The protein localises to the cytoskeleton. It is found in the microtubule organizing center. It localises to the centrosome. Its subcellular location is the cilium basal body. Functionally, involved in vesicle transport in photoreceptor cells. In Homo sapiens (Human), this protein is Double zinc ribbon and ankyrin repeat-containing protein 1.